Here is a 95-residue protein sequence, read N- to C-terminus: Co-chaperonin GroES (95 aa).

The protein belongs to the GroES chaperonin family. As to quaternary structure, heptamer of 7 subunits arranged in a ring. Interacts with the chaperonin GroEL.

The protein resides in the cytoplasm. In terms of biological role, together with the chaperonin GroEL, plays an essential role in assisting protein folding. The GroEL-GroES system forms a nano-cage that allows encapsulation of the non-native substrate proteins and provides a physical environment optimized to promote and accelerate protein folding. GroES binds to the apical surface of the GroEL ring, thereby capping the opening of the GroEL channel. In Aliivibrio salmonicida (strain LFI1238) (Vibrio salmonicida (strain LFI1238)), this protein is Co-chaperonin GroES.